Here is a 517-residue protein sequence, read N- to C-terminus: Cytochrome b mRNA maturase bI3 (517 aa).

Topologically, residues 1-31 are mitochondrial matrix; sequence MAFRKSNVYLSLVNSYIIDSPQPSSINYWWN. A cytochrome b region spans residues 1–169; the sequence is MAFRKSNVYL…DIVSWLWGGF (169 aa). A helical membrane pass occupies residues 32–52; sequence MGSLLGLCLVIQIVTGIFMAM. Residues 53 to 84 lie on the Mitochondrial intermembrane side of the membrane; that stretch reads HYSSNIELAFSSVEHIMRDVHNGYILRYLHAN. A helical membrane pass occupies residues 85–105; it reads GASFFFMVMFMHMAKGLYYGS. Residues 106–115 are Mitochondrial matrix-facing; that stretch reads YRSPRVTLWN. A helical transmembrane segment spans residues 116-136; that stretch reads VGVIIFILTIATAFLGYCCVY. Residues 137–145 lie on the Mitochondrial intermembrane side of the membrane; the sequence is GQMSHWGAT. Residues 146 to 166 form a helical membrane-spanning segment; sequence VITNLFSAIPFVGNDIVSWLW. Over 167–184 the chain is Mitochondrial matrix; sequence GGFNMEDPYYSNMMLNKS. The tract at residues 170–517 is maturase; sequence NMEDPYYSNM…NNYFKIPPKY (348 aa). A helical membrane pass occupies residues 185-205; the sequence is VLCWNIFIWMMNYYIIQLIIY. Residues 206–224 are Mitochondrial intermembrane-facing; the sequence is NNMIWNKNNMVKMFIMRRK. Residues 225–242 traverse the membrane as a helical segment; sequence LAVINMYMYMKLIIQRTY. Over 243 to 517 the chain is Mitochondrial matrix; it reads SYYMNNTIIY…NNYFKIPPKY (275 aa).

In the N-terminal section; belongs to the cytochrome b family. The protein in the C-terminal section; belongs to the LAGLIDADG endonuclease family. As to quaternary structure, forms a ribonucleoprotein complex composed of maturase bI3 and 2 dimers of MRS1 that assemble around the bI3 RNA.

It localises to the mitochondrion inner membrane. Its function is as follows. Mitochondrial mRNA maturase required for splicing of intron 3 of the cytochrome b (COB) gene, containing its own coding sequence. In vivo splicing requires the formation of a ribonucleoprotein complex together with the imported mitochondrial RNA-splicing protein MRS1. The complex seems to stimulate the intrinsic ribozyme activity of intron bI3 through binding to and stabilizing specific secondary and tertiary structure elements in the RNA. The protein is Cytochrome b mRNA maturase bI3 (BI3) of Saccharomyces cerevisiae (strain ATCC 204508 / S288c) (Baker's yeast).